The sequence spans 159 residues: Cyclic pyranopterin monophosphate synthase (159 aa).

Residues 75 to 77 (MCH) and 113 to 114 (ME) each bind substrate. Asp128 is a catalytic residue.

Belongs to the MoaC family. Homohexamer; trimer of dimers.

It catalyses the reaction (8S)-3',8-cyclo-7,8-dihydroguanosine 5'-triphosphate = cyclic pyranopterin phosphate + diphosphate. The protein operates within cofactor biosynthesis; molybdopterin biosynthesis. Catalyzes the conversion of (8S)-3',8-cyclo-7,8-dihydroguanosine 5'-triphosphate to cyclic pyranopterin monophosphate (cPMP). The protein is Cyclic pyranopterin monophosphate synthase of Desulfatibacillum aliphaticivorans.